Reading from the N-terminus, the 86-residue chain is Mu-theraphotoxin-Hhn1c (86 aa).

The first 21 residues, 1–21 (MKASMFLALAGLALLFVVCYA), serve as a signal peptide directing secretion. A propeptide spanning residues 22 to 49 (SESEEKEFSNELLSSVLAVDDNSKGEER) is cleaved from the precursor. Disulfide bonds link Cys51–Cys66, Cys58–Cys73, and Cys65–Cys80. Ile84 is subject to Isoleucine amide.

It belongs to the neurotoxin 10 (Hwtx-1) family. 22 (Htx-4) subfamily. Monomer. Expressed by the venom gland.

The protein localises to the secreted. Neurotoxin. Selectively blocks neuronal tetrodotoxin-sensitive voltage-gated sodium channels (Nav). Does not affect tetrodotoxin-resistant voltage-gated sodium channels or calcium channels. This chain is Mu-theraphotoxin-Hhn1c, found in Cyriopagopus hainanus (Chinese bird spider).